Consider the following 1099-residue polypeptide: Contactin-5 (1099 aa).

An N-terminal signal peptide occupies residues 1–18; it reads MASSWRLILFLSFTSCLS. Ig-like C2-type domains are found at residues 99 to 190, 196 to 282, 300 to 385, 390 to 474, 480 to 569, and 571 to 660; these read PVFV…ATLQ, NFSG…RVLS, PKIE…GQLQ, PHWV…AELK, PSFE…VSVK, and PTRI…DSVS. Cys123 and Cys173 are disulfide-bonded. Asn138 and Asn196 each carry an N-linked (GlcNAc...) asparagine glycan. Disulfide bonds link Cys217–Cys269 and Cys322–Cys369. 3 N-linked (GlcNAc...) asparagine glycosylation sites follow: Asn397, Asn449, and Asn540. Cystine bridges form between Cys411-Cys458, Cys503-Cys551, and Cys593-Cys650. Fibronectin type-III domains lie at 673–771, 776–873, 878–972, and 977–1067; these read PPGV…TNEA, APSN…SAEG, APTD…TKRH, and PPGN…SYAG. N-linked (GlcNAc...) asparagine glycans are attached at residues Asn779, Asn816, and Asn931. Residues 958–983 are disordered; sequence YGPPSREVSATTKRHPPSEPPGNLRW. Residue Asn1002 is glycosylated (N-linked (GlcNAc...) asparagine). Ser1072 carries the GPI-anchor amidated serine lipid modification. Residues 1073–1099 constitute a propeptide, removed in mature form; that stretch reads AQSTLHSLSKWSSVTLLLALMLPSSSW.

This sequence belongs to the immunoglobulin superfamily. Contactin family. As to quaternary structure, interacts with PTPRG. As to expression, specifically expressed in the nervous system. Expressed in cerebrum and cerebellum but at low level in spinal cord. In brain, it is expressed in highly restricted regions at postnatal day 7, such as the auditory pathway, including the cochlear nucleus, superior olive, inferior colliculus, medial geniculate nucleus and auditory cortex. Expressed in the accessory olfactory bulb, glomerular and mitral cell layers in the olfactory bulb, anterior thalamic nuclei, layers II-IV of the cerebral cortex, dentate gyrus of the hippocampus and external granule cells and Purkinje cells of the cerebellum. Also expressed in the piriform cortex, inferior olive and facial nucleus. Weakly or not expressed in other parts of the brain.

It is found in the cell membrane. Its function is as follows. Contactins mediate cell surface interactions during nervous system development. Has some neurite outgrowth-promoting activity in the cerebral cortical neurons but not in hippocampal neurons. Probably involved in neuronal activity in the auditory system. The chain is Contactin-5 (Cntn5) from Rattus norvegicus (Rat).